A 393-amino-acid polypeptide reads, in one-letter code: MNVKGFRFSAVEAAIKKPGRLDLALICSDAPAAVAAVYTTNKVKAAPVLLDMERTTSGTCRAVVVNSGNANACTGDRGMEDARETTSLVAERIGASEHEVLVCSTGVIGVPLPMERIRGGIPSLVAGLGSATLDQIAAAIMTTDTFPKLEARTGTAGGVGYTIAGIAKGAGMIMPNMATMLAFVVTDAAVDPQWLDRVFRRANDTSFNAITVDGDMSTNDTAIIMANGAAGNPVLSEGSEGAAEFAVLLEEVLLSLAKLIVKDGEGATKFVEVTVKGARSDADAKRAAMAVANSCLVKTAFFGQDANWGRIFAAVGYSGADVEPDRAELFFDDVRMVQGGVFAGGDAEARGTGVLRKKEFTVTVDLHLGDGRATVYTSDLSYDYVKINADYRT.

Positions 142, 168, 179, 265, 388, and 393 each coordinate substrate. T179 acts as the Nucleophile in catalysis.

It belongs to the ArgJ family. Heterotetramer of two alpha and two beta chains.

The protein resides in the cytoplasm. It carries out the reaction N(2)-acetyl-L-ornithine + L-glutamate = N-acetyl-L-glutamate + L-ornithine. The catalysed reaction is L-glutamate + acetyl-CoA = N-acetyl-L-glutamate + CoA + H(+). Its pathway is amino-acid biosynthesis; L-arginine biosynthesis; L-ornithine and N-acetyl-L-glutamate from L-glutamate and N(2)-acetyl-L-ornithine (cyclic): step 1/1. It participates in amino-acid biosynthesis; L-arginine biosynthesis; N(2)-acetyl-L-ornithine from L-glutamate: step 1/4. In terms of biological role, catalyzes two activities which are involved in the cyclic version of arginine biosynthesis: the synthesis of N-acetylglutamate from glutamate and acetyl-CoA as the acetyl donor, and of ornithine by transacetylation between N(2)-acetylornithine and glutamate. This is Arginine biosynthesis bifunctional protein ArgJ from Geobacter sulfurreducens (strain ATCC 51573 / DSM 12127 / PCA).